The following is a 63-amino-acid chain: Muscarinic toxin 2 (63 aa).

4 disulfides stabilise this stretch: C3–C22, C17–C42, C44–C55, and C56–C61.

This sequence belongs to the three-finger toxin family. Short-chain subfamily. Type B muscarinic toxin sub-subfamily. In terms of assembly, monomer. Expressed by the venom gland.

It is found in the secreted. In terms of biological role, blocks M2 muscarinic acetylcholine receptors (CHRM2). Fully blocks the binding of N-methylscopolamine (NMS) and oxotremorine-M to M2 receptors, slightly increased NMS binding to M1 receptors. This chain is Muscarinic toxin 2, found in Dendroaspis angusticeps (Eastern green mamba).